We begin with the raw amino-acid sequence, 496 residues long: Lysine--tRNA ligase (496 aa).

Mg(2+) is bound by residues glutamate 409 and glutamate 416.

It belongs to the class-II aminoacyl-tRNA synthetase family. In terms of assembly, homodimer. Mg(2+) serves as cofactor.

Its subcellular location is the cytoplasm. The enzyme catalyses tRNA(Lys) + L-lysine + ATP = L-lysyl-tRNA(Lys) + AMP + diphosphate. This Streptococcus pneumoniae (strain Hungary19A-6) protein is Lysine--tRNA ligase.